The primary structure comprises 299 residues: Regucalcin (299 aa).

An a divalent metal cation-binding site is contributed by glutamate 18. Residues arginine 101, asparagine 103, and glutamate 121 each coordinate substrate. The residue at position 144 (lysine 144) is an N6-succinyllysine. Asparagine 154 and aspartate 204 together coordinate a divalent metal cation. Aspartate 204 acts as the Proton donor/acceptor in catalysis. An N6-succinyllysine mark is found at lysine 244 and lysine 253.

Belongs to the SMP-30/CGR1 family. In terms of assembly, monomer. The cofactor is Zn(2+). Requires Mn(2+) as cofactor. It depends on Ca(2+) as a cofactor. Mg(2+) is required as a cofactor.

Its subcellular location is the cytoplasm. It catalyses the reaction D-glucono-1,5-lactone + H2O = D-gluconate + H(+). Gluconolactonase with low activity towards other sugar lactones, including gulonolactone and galactonolactone. Can also hydrolyze diisopropyl phosphorofluoridate and phenylacetate (in vitro). Calcium-binding protein. Modulates Ca(2+) signaling, and Ca(2+)-dependent cellular processes and enzyme activities. In Homo sapiens (Human), this protein is Regucalcin (RGN).